The primary structure comprises 449 residues: Bifunctional protein GlmU (449 aa).

The segment at 1–225 (MLSVAILAAG…NGELQGINNR (225 aa)) is pyrophosphorylase. UDP-N-acetyl-alpha-D-glucosamine contacts are provided by residues 7-10 (LAAG), lysine 21, glutamine 73, and 78-79 (GT). Aspartate 103 provides a ligand contact to Mg(2+). 4 residues coordinate UDP-N-acetyl-alpha-D-glucosamine: glycine 140, glutamate 154, asparagine 169, and asparagine 223. Asparagine 223 contacts Mg(2+). Residues 226 to 246 (IQLSKCEEIIQNSIKEKHMLN) form a linker region. The N-acetyltransferase stretch occupies residues 247 to 449 (GVTFINQASC…NIDNWERKKP (203 aa)). Residues arginine 328 and lysine 346 each coordinate UDP-N-acetyl-alpha-D-glucosamine. Residue histidine 358 is the Proton acceptor of the active site. The UDP-N-acetyl-alpha-D-glucosamine site is built by tyrosine 361 and asparagine 372. Residues alanine 375, alanine 418, and arginine 435 each contribute to the acetyl-CoA site.

This sequence in the N-terminal section; belongs to the N-acetylglucosamine-1-phosphate uridyltransferase family. In the C-terminal section; belongs to the transferase hexapeptide repeat family. In terms of assembly, homotrimer. It depends on Mg(2+) as a cofactor.

The protein localises to the cytoplasm. The catalysed reaction is alpha-D-glucosamine 1-phosphate + acetyl-CoA = N-acetyl-alpha-D-glucosamine 1-phosphate + CoA + H(+). It carries out the reaction N-acetyl-alpha-D-glucosamine 1-phosphate + UTP + H(+) = UDP-N-acetyl-alpha-D-glucosamine + diphosphate. It participates in nucleotide-sugar biosynthesis; UDP-N-acetyl-alpha-D-glucosamine biosynthesis; N-acetyl-alpha-D-glucosamine 1-phosphate from alpha-D-glucosamine 6-phosphate (route II): step 2/2. It functions in the pathway nucleotide-sugar biosynthesis; UDP-N-acetyl-alpha-D-glucosamine biosynthesis; UDP-N-acetyl-alpha-D-glucosamine from N-acetyl-alpha-D-glucosamine 1-phosphate: step 1/1. The protein operates within bacterial outer membrane biogenesis; LPS lipid A biosynthesis. In terms of biological role, catalyzes the last two sequential reactions in the de novo biosynthetic pathway for UDP-N-acetylglucosamine (UDP-GlcNAc). The C-terminal domain catalyzes the transfer of acetyl group from acetyl coenzyme A to glucosamine-1-phosphate (GlcN-1-P) to produce N-acetylglucosamine-1-phosphate (GlcNAc-1-P), which is converted into UDP-GlcNAc by the transfer of uridine 5-monophosphate (from uridine 5-triphosphate), a reaction catalyzed by the N-terminal domain. In Prochlorococcus marinus (strain MIT 9312), this protein is Bifunctional protein GlmU.